A 1668-amino-acid polypeptide reads, in one-letter code: FEPYIYALLKDDSAIEEVKKITAGRHGRVVKVKRAEKVKKKFLGRPIEVWKLYFTHPQDVPAIRDEIRRHSAVVDIYEYDIPFAKRYLIDKGLIPMEGDEELKMMSFDIETLYHEGEEFGTGPILMISYADEGEARVITWKKIDLPYVEVVSTEKEMIKRFLKVVKEKDPDVLITYNGDNFDFAYLKKRCEKIGIKFTLRRDGSEPKIQRMGDRFAVEVKGRIHFDLYPVIRRTINLPTYTLEAVYEAVFGTPKEKVYPEEITTAWETGEGLERVARYSMEDAKVTYELGREFFPMEAQLSRLIGQSLWDVSRSSTGNLVEWFLLRKAYERNEIAPNKPDERELARRRGGYAGGYVKEPERGLWDNIVYLDFMSLYPSIIITHNVSPDTFNREGCKEYDTAPQVGHKFCKDVQGFIPSLLGALLDERQKIKKRMKASIDPLEKKLLDYRQKAIKILANSLLPEEWIPLVENGKVRLHRIGEFVDKLMETDSELVKRNGDTEVLEVRGIRALSFDRKSKKARVMPVKAVIRHRYSGDVYEIVLGSGRRITVTEGHSLFAYGDGELREVTGGEIKAGDLLAVPRRVNLPEKKERLNLVELLRRLPEEETGDIILTIPVKGRKNFFKGMLRTLRWISGEEKRPRTARRYLEHLEGLGYVRLKKIGYEVTDREGLERYRKLYERLVEAVRYNGNKREYLVEFNAVRDVIALMPEEELRDWLVGTRNGFRMRPFVEIEEDFAKLLGYYVSEGNARKWRNQKNGWSYTVKLYNENQRVLDDMESLAERFFGRVKRGKNYIEIPRKMAYIIFENLCGTLAENKRVPEAIFTSPESVRWAFIEGYFIGDGDVHPSKRVRLSTKSELLVNGLVLLLNSLGVSAIKIRHDSGVYRVYVNEELPFTDYRKKKNAYYSHVIPKEILEETFGKVFQRSVSYEKFRELVKSEKLDGEKAKRIEWLLNGDVVLDKVLEVKKRPYEGYVYDLSVEEDENFLAGFGLLYAHNSYYGYYGYARARWYCKECAESVTAWGRDYIETTIHEIEERFGFKVLYADSVTGETEIIIKRNGKVEFVAIEELFQRVDYRIGEKEYCVLEGVEALTLDNRGRLVWKSVPYVMRHRTNKRIYRVWFTNSWYLDVTEDHSLIGYMNTSKVKPGKPLKERLVEVKPGELGESVKSLITPNRAIAHGIRVNPIAVKLWELIGLLVGDGNWGGQSNWAKYNVGLSLGLDKEEIEEKILKPLKNTGIISNYYDKSKKGDVSILSKWLARFMVRYFKDESGSKRIPEFMFNLPREYIEAFLRGLFSADGTVSLRKGVPEVRLTSVNPELSSSVRKLLWLVGVSNSMFVETNPNRYLGKESGTHSVHVRIKDKHRFAERIGFLLDRKATKLSENLGGHTSKKRAYKYDFDLVYPKKVEEIAYDGYVYDIEVEGTHRFFANGILVHNTDGFFATIPGADAETVKKKAKEFLKYINAKLPGLLELEYEGFYVRGFFVTKKKYAVIDEEGKITTRGLEIVRRDWSEIAKETQARVLEAILRHGDVEEAVRIVKDVTEKLSKYEVPPEKLVIHEQITRELKDYKATGPHVAIAKRLAARGIKIRPGTVISYIVLKGSGRIGDRAIPFDEFDPTKHRYDAEYYIENQVLPAVERILKAFGYKKEELRYQKTRQVGLGAWLKLKGKK.

DOD-type homing endonuclease domains lie at 739–872 and 1191–1330; these read LLGY…SLGV and LIGL…LVGV.

This sequence belongs to the DNA polymerase type-B family. Post-translationally, this protein undergoes a protein self splicing that involves a post-translational excision of the intervening region (intein) followed by peptide ligation.

The catalysed reaction is DNA(n) + a 2'-deoxyribonucleoside 5'-triphosphate = DNA(n+1) + diphosphate. In addition to polymerase activity, this DNA polymerase exhibits 3' to 5' exonuclease activity. Its function is as follows. PI-ThyI and PI-ThyII are endonucleases. PI-ThyI cleaves the inteinless sequence of the Thy DNA pol gene. It requires a 21-bp minimal recognition sequence. This Thermococcus hydrothermalis protein is DNA polymerase (pol).